The chain runs to 452 residues: Cholesterol 7-desaturase nvd 2 (452 aa).

2 helical membrane-spanning segments follow: residues 6 to 26 (LIRI…MGLC) and 32 to 52 (FPVM…ALVM). In terms of domain architecture, Rieske spans 107–212 (WFKVADSTWI…CCEVDGMAYL (106 aa)). Cysteine 148, histidine 150, cysteine 169, and histidine 172 together coordinate [2Fe-2S] cluster.

This sequence belongs to the cholesterol 7-desaturase family. Requires [2Fe-2S] cluster as cofactor.

The protein localises to the membrane. It carries out the reaction cholesterol + NADPH + O2 + H(+) = 7-dehydrocholesterol + NADP(+) + 2 H2O. It catalyses the reaction cholesterol + NADH + O2 + H(+) = 7-dehydrocholesterol + NAD(+) + 2 H2O. Its pathway is steroid hormone biosynthesis; dafachronic acid biosynthesis. In terms of biological role, catalyzes the production of 7-dehydrocholesterol (7-DHC or cholesta-5,7-dien-3beta-ol) by inserting a double bond (desaturating) at the C7-C8 single bond of cholesterol. Essential regulator of steroid biosynthesis as this reaction is the first step in the synthesis of the steroid hormone Delta(7)-dafachronic acid. This chain is Cholesterol 7-desaturase nvd 2, found in Ciona intestinalis (Transparent sea squirt).